The following is a 442-amino-acid chain: Dihydrolipoyllysine-residue acetyltransferase component of pyruvate dehydrogenase complex (442 aa).

The Lipoyl-binding domain occupies 2-77 (AFEFKLPDIG…TVGQTIITFD (76 aa)). N6-lipoyllysine is present on Lys-43. The span at 84–97 (LQFKGSDESDDAKT) shows a compositional bias: basic and acidic residues. Residues 84-136 (LQFKGSDESDDAKTEAQVQSTAEAGQDVAKEEQAQEPAKATGAGQQDQAEVDP) are disordered. The Peripheral subunit-binding (PSBD) domain maps to 141–178 (IAMPSVRKYAREKGVDIRKVTGSGNNGRVVKEDIDSFV). Residues 182–208 (AQEAAPQETAAPQETAAKPAAAPAPEG) are compositionally biased toward low complexity. The tract at residues 182–215 (AQEAAPQETAAPQETAAKPAAAPAPEGEFPETRE) is disordered. His-413 is a catalytic residue.

This sequence belongs to the 2-oxoacid dehydrogenase family. Forms a 24-polypeptide structural core with octahedral symmetry. (R)-lipoate serves as cofactor.

It catalyses the reaction N(6)-[(R)-dihydrolipoyl]-L-lysyl-[protein] + acetyl-CoA = N(6)-[(R)-S(8)-acetyldihydrolipoyl]-L-lysyl-[protein] + CoA. The pyruvate dehydrogenase complex catalyzes the overall conversion of pyruvate to acetyl-CoA and CO(2). It contains multiple copies of three enzymatic components: pyruvate dehydrogenase (E1), dihydrolipoamide acetyltransferase (E2) and lipoamide dehydrogenase (E3). Functionally, the B.subtilis PDH complex also possesses branched-chain 2-oxoacid dehydrogenase (BCDH) activity. The sequence is that of Dihydrolipoyllysine-residue acetyltransferase component of pyruvate dehydrogenase complex (pdhC) from Bacillus subtilis (strain 168).